Reading from the N-terminus, the 142-residue chain is Large ribosomal subunit protein uL13 (142 aa).

It belongs to the universal ribosomal protein uL13 family. As to quaternary structure, part of the 50S ribosomal subunit.

This protein is one of the early assembly proteins of the 50S ribosomal subunit, although it is not seen to bind rRNA by itself. It is important during the early stages of 50S assembly. This chain is Large ribosomal subunit protein uL13, found in Shewanella putrefaciens (strain CN-32 / ATCC BAA-453).